The chain runs to 212 residues: Ribonuclease HII (212 aa).

The 195-residue stretch at 17–211 (RVLAGIDEAG…VLELLDLTDS (195 aa)) folds into the RNase H type-2 domain. Residues aspartate 23, glutamate 24, and aspartate 120 each contribute to the a divalent metal cation site.

This sequence belongs to the RNase HII family. Mn(2+) is required as a cofactor. The cofactor is Mg(2+).

The protein localises to the cytoplasm. It catalyses the reaction Endonucleolytic cleavage to 5'-phosphomonoester.. Its function is as follows. Endonuclease that specifically degrades the RNA of RNA-DNA hybrids. This Chloroflexus aggregans (strain MD-66 / DSM 9485) protein is Ribonuclease HII.